We begin with the raw amino-acid sequence, 358 residues long: MADSTSMDHDGEQRGTKRKRDAGAGGSGAGIGKGTSNYVKEGYGPNMSEMVPRNIMNKGNHTVYHVVKQQKYLDFNYVSNQNPYIIPYQTAGFWASMWDQTDIGSNNTINIMKALNNVSVGVTWIKGEITFEVYAVTRQRLLTGTTNQTTWDFETSQNMFIADADREPENFNLATAAATGPLAQQTTQTLLFNANNDRYTKYELPQRNQYTREYDFQQLTNNYMWKPTDISAAANFRRLIPMAEGVYTTTAATTKMAELTEQKSVYAGSGKTTEASLFRNRTSYPRMHMAQPQVPDETGYMKFRYQVRMSTKLHLVFHLYPDYSTSTNIEYMGRQVLELPEVTATGGVVTCMPYEIKT.

Residues 1-15 show a composition bias toward basic and acidic residues; it reads MADSTSMDHDGEQRG. The disordered stretch occupies residues 1–37; it reads MADSTSMDHDGEQRGTKRKRDAGAGGSGAGIGKGTSN. Positions 23 to 33 are enriched in gly residues; sequence GAGGSGAGIGK.

Its subcellular location is the virion. Capsid protein self-assembles to form an icosahedral capsid with a T=1 symmetry, about 22 nm in diameter, and consisting of 60 copies of size variants of the capsid proteins, which differ in the N-terminushe capsid encapsulates the genomic ssDNA. Capsid proteins are responsible for the attachment to host cell receptors. This attachment induces virion internalization predominantly through clathrin-dependent endocytosis. In Aedes (Aedes densovirus), this protein is Capsid protein VP1/VP2 (VP).